We begin with the raw amino-acid sequence, 237 residues long: Phosphoglycolate phosphatase (237 aa).

The active-site Nucleophile is Asp-15. Residues Asp-15, Asp-17, and Asp-177 each coordinate Mg(2+).

This sequence belongs to the HAD-like hydrolase superfamily. CbbY/CbbZ/Gph/YieH family. Mg(2+) serves as cofactor.

The catalysed reaction is 2-phosphoglycolate + H2O = glycolate + phosphate. It functions in the pathway organic acid metabolism; glycolate biosynthesis; glycolate from 2-phosphoglycolate: step 1/1. Functionally, specifically catalyzes the dephosphorylation of 2-phosphoglycolate. Is involved in the dissimilation of the intracellular 2-phosphoglycolate formed during the DNA repair of 3'-phosphoglycolate ends, a major class of DNA lesions induced by oxidative stress. In Caulobacter vibrioides (strain ATCC 19089 / CIP 103742 / CB 15) (Caulobacter crescentus), this protein is Phosphoglycolate phosphatase.